The sequence spans 661 residues: Bifunctional xylanase/xylan deacetylase (661 aa).

Residues 1-27 form the signal peptide; that stretch reads MKLPTLGKCVVRTLMGAVALGAISVNA. The GH11 domain maps to 29-226; the sequence is TLSSNSTGTN…SRGSSDITVS (198 aa). Catalysis depends on Glu116, which acts as the Nucleophile; for endoxylanase activity. Residue Glu213 is the Proton donor; for endoxylanase activity of the active site. Positions 220–259 are disordered; it reads SSDITVSEGTSGGGTSSVGGASSSVNSSTGGGSSGGITVR. The span at 237 to 247 shows a compositional bias: low complexity; it reads VGGASSSVNSS. The segment at 394–577 is polysaccharide deacetylase; sequence SNCSGYVGIT…AKGLCPGRID (184 aa). The NodB homology domain occupies 398-574; sequence GYVGITFDDG…NLRAKGLCPG (177 aa). Residues 578–610 form a disordered region; that stretch reads PNTGRAVAPSSSGGSSSVALSSSSRSSSSAGGN. Over residues 581–608 the composition is skewed to low complexity; sequence GRAVAPSSSGGSSSVALSSSSRSSSSAG. The 30-residue stretch at 616–645 folds into the CBM10 domain; sequence QCNWWGTFYPLCQTQTSGWGWENSRSCIST.

In the N-terminal section; belongs to the glycosyl hydrolase 11 (cellulase G) family.

It is found in the secreted. The enzyme catalyses Endohydrolysis of (1-&gt;4)-beta-D-xylosidic linkages in xylans.. It carries out the reaction Deacetylation of xylans and xylo-oligosaccharides.. The protein operates within glycan degradation; xylan degradation. Functionally, endo-acting xylanase which specifically cleaves internal linkages on the xylan backbone, releasing xylooligosaccharides. Is able to hydrolyze oat spelt xylan and the arabinoxylans from wheat and rye, releasing xylobiose as the major product. Also likely catalyzes, via its C-terminal domain, the removal of acetyl groups from acetylated xylan. Thus, has the capability of hydrolyzing acetylated xylan. Does not attack mannan, galactan, arabinan or any cellulosic substrates. The sequence is that of Bifunctional xylanase/xylan deacetylase (xyn11A) from Cellvibrio japonicus (Pseudomonas fluorescens subsp. cellulosa).